A 288-amino-acid polypeptide reads, in one-letter code: Ribonuclease HIII (288 aa).

Positions 76 to 288 (YSAIGSDEVG…KNITKQFIKN (213 aa)) constitute an RNase H type-2 domain. The a divalent metal cation site is built by Asp82, Glu83, and Asp185.

Belongs to the RNase HII family. RnhC subfamily. Requires Mn(2+) as cofactor. Mg(2+) is required as a cofactor.

It localises to the cytoplasm. It catalyses the reaction Endonucleolytic cleavage to 5'-phosphomonoester.. Endonuclease that specifically degrades the RNA of RNA-DNA hybrids. This chain is Ribonuclease HIII, found in Phytoplasma mali (strain AT).